Here is a 259-residue protein sequence, read N- to C-terminus: Ribonuclease PH (259 aa).

Residues R88 and 126-128 (GTR) each bind phosphate.

The protein belongs to the RNase PH family. In terms of assembly, homohexameric ring arranged as a trimer of dimers.

The enzyme catalyses tRNA(n+1) + phosphate = tRNA(n) + a ribonucleoside 5'-diphosphate. Phosphorolytic 3'-5' exoribonuclease that plays an important role in tRNA 3'-end maturation. Removes nucleotide residues following the 3'-CCA terminus of tRNAs; can also add nucleotides to the ends of RNA molecules by using nucleoside diphosphates as substrates, but this may not be physiologically important. Probably plays a role in initiation of 16S rRNA degradation (leading to ribosome degradation) during starvation. This Mycobacterium avium (strain 104) protein is Ribonuclease PH.